A 282-amino-acid chain; its full sequence is Heme oxygenase 1, chloroplastic (282 aa).

The transit peptide at 1-54 directs the protein to the chloroplast; it reads MAYLAPISSSLSIFKNPQLSRFQFSSSSPNPLFLRPRIQILSMTMNKSPSLVVV. His-86 contacts heme b.

It belongs to the heme oxygenase family. Widely expressed.

Its subcellular location is the plastid. The protein resides in the chloroplast. It carries out the reaction heme b + 3 reduced [NADPH--hemoprotein reductase] + 3 O2 = biliverdin IXalpha + CO + Fe(2+) + 3 oxidized [NADPH--hemoprotein reductase] + 3 H2O + H(+). Its activity is regulated as follows. Activated by ascorbate. Key enzyme in the synthesis of the chromophore of the phytochrome family of plant photoreceptors. Catalyzes the opening of the heme ring to form the open-chain tetrapyrrole biliverdin IX with the release of iron and carbon monoxide (CO). Produces specifically the biliverdin IX-alpha isomer. Can form complex with heme, is ferredoxin-dependent and its activity is increased in the presence of ascorbate. Plays a role in salt acclimation signaling. May affect the plastid-to-nucleus signaling pathway by perturbing tetrapyrrole synthesis. The plastid-to-nucleus signal plays an important role in the coordinated expression of both nuclear- and chloroplast-localized genes that encode photosynthesis-related proteins. The polypeptide is Heme oxygenase 1, chloroplastic (HO1) (Arabidopsis thaliana (Mouse-ear cress)).